A 282-amino-acid chain; its full sequence is Para-Rep C1 (282 aa).

One can recognise a CRESS-DNA virus Rep endonuclease domain in the interval 1–99 (MASKRWCFTL…ETLISEIGAP (99 aa)). The short motif at 7–10 (CFTL) is the RCR-1 element. A divalent metal cation is bound by residues glutamate 38 and histidine 47. The RCR-2 motif lies at 47–49 (HLQ). Positions 56 to 77 (KMIRLGGLKKKFGYRAHWEIAK) match the Nuclear localization signal motif. Tyrosine 86 functions as the For DNA cleavage activity in the catalytic mechanism. The short motif at 86–89 (YCTK) is the RCR-3 element. Serine 94 provides a ligand contact to a divalent metal cation. 174–182 (GSDGGEGKS) lines the ATP pocket.

Belongs to the nanoviridea/circoviridae replication-associated protein family. As to quaternary structure, homooligomer (Potential). Rep binds to repeated DNA motifs (iterons). Mg(2+) is required as a cofactor. It depends on Mn(2+) as a cofactor.

The protein localises to the host nucleus. It catalyses the reaction ATP + H2O = ADP + phosphate + H(+). In terms of biological role, initiates and terminates the replication only of its own subviral DNA molecule. The closed circular ssDNA genome is first converted to a superhelical dsDNA. Rep binds a specific hairpin at the genome origin of replication. Introduces an endonucleolytic nick within the intergenic region of the genome, thereby initiating the rolling circle replication (RCR). Following cleavage, binds covalently to the 5'-phosphate of DNA as a tyrosyl ester. The cleavage gives rise to a free 3'-OH that serves as a primer for the cellular DNA polymerase. The polymerase synthesizes the (+) strand DNA by rolling circle mechanism. After one round of replication, a Rep-catalyzed nucleotidyl transfer reaction releases a circular single-stranded virus genome, thereby terminating the replication. Displays origin-specific DNA cleavage, nucleotidyl transferase, ATPase and helicase activities. The sequence is that of Para-Rep C1 (C1) from Faba bean necrotic yellows C11 alphasatellite (FBNYC11A).